The following is a 305-amino-acid chain: UDP-N-acetylenolpyruvoylglucosamine reductase (305 aa).

The FAD-binding PCMH-type domain maps to 22–190; the sequence is KVGGAADFFA…LSARFRLQAG (169 aa). Arg-169 is a catalytic residue. The active-site Proton donor is the Ser-220. Glu-290 is an active-site residue.

It belongs to the MurB family. FAD serves as cofactor.

The protein resides in the cytoplasm. It carries out the reaction UDP-N-acetyl-alpha-D-muramate + NADP(+) = UDP-N-acetyl-3-O-(1-carboxyvinyl)-alpha-D-glucosamine + NADPH + H(+). It functions in the pathway cell wall biogenesis; peptidoglycan biosynthesis. Cell wall formation. The chain is UDP-N-acetylenolpyruvoylglucosamine reductase from Synechococcus sp. (strain RCC307).